A 1374-amino-acid chain; its full sequence is Ribonuclease 3 (1374 aa).

Disordered stretches follow at residues 1–95 (MMQG…PLPP), 130–406 (PPVP…EEEE), and 452–497 (LGSR…SSSS). Residues 59 to 68 (PSTTFSNSPA) are compositionally biased toward polar residues. Pro residues-rich tracts occupy residues 70-95 (NFLPPRPDFVPFPPPMPPSAQGPLPP) and 145-160 (MMPPPSMPHPPPPPVM). The span at 182–202 (FNSFQNNPSSFLPSANNSSSP) shows a compositional bias: low complexity. 2 stretches are compositionally biased toward basic and acidic residues: residues 216-289 (PSER…ERER) and 298-313 (RRSPSLERSYKKEYKR). A phosphoserine mark is found at S355 and S373. Residues 364-399 (RWEEEKDRWSDNQSSGKDKNYTSIKEKEPEETMPDK) show a composition bias toward basic and acidic residues. The necessary for interaction with DGCR8 and pri-miRNA processing activity stretch occupies residues 390-1365 (KEPEETMPDK…RWEREHQERE (976 aa)). Acidic residues predominate over residues 475–491 (EDLESSSESECESDEDS). Positions 536, 538, 549, 561, 609, 676, and 680 each coordinate Zn(2+). RNase III domains follow at residues 876–1056 (LMHL…LEGS) and 1107–1233 (LTEF…IDKD). Residue E969 coordinates Mg(2+). H1026 lines the Zn(2+) pocket. The Mg(2+) site is built by N1042, E1045, E1147, D1219, and E1222. The DRBM domain occupies 1260–1334 (DPKSQLQQCC…AMDALEKYNF (75 aa)).

The protein belongs to the ribonuclease III family. In terms of assembly, component of the microprocessor complex, or pri-miRNA processing protein complex, which is composed of DROSHA and DGCR8. The microprocessor complex is a heterotrimer; each of the two DROSHA RNase III domains binds one DGCR8 (via C-terminal region). Interacts with SP1 and SNIP1. Interacts with SRRT/ARS2. Interacts with CPSF3 and ISY1; this interaction is in an RNA dependent manner. Interacts with PUS10; interaction promotes pri-miRNAs processing. Mg(2+) serves as cofactor. Mn(2+) is required as a cofactor. Degraded by autophagy in response to neuronal activity in motor neurons. As to expression, ubiquitous.

The protein localises to the nucleus. It localises to the nucleolus. Its subcellular location is the cytoplasm. It carries out the reaction Endonucleolytic cleavage to 5'-phosphomonoester.. Its function is as follows. Ribonuclease III double-stranded (ds) RNA-specific endoribonuclease that is involved in the initial step of microRNA (miRNA) biogenesis. Component of the microprocessor complex that is required to process primary miRNA transcripts (pri-miRNAs) to release precursor miRNA (pre-miRNA) in the nucleus. Within the microprocessor complex, DROSHA cleaves the 3' and 5' strands of a stem-loop in pri-miRNAs (processing center 11 bp from the dsRNA-ssRNA junction) to release hairpin-shaped pre-miRNAs that are subsequently cut by the cytoplasmic DICER to generate mature miRNAs. Involved also in pre-rRNA processing. Cleaves double-strand RNA and does not cleave single-strand RNA. Involved in the formation of GW bodies. Plays a role in growth homeostasis in response to autophagy in motor neurons. In Homo sapiens (Human), this protein is Ribonuclease 3 (DROSHA).